A 191-amino-acid polypeptide reads, in one-letter code: Protein GrpE (191 aa).

Basic and acidic residues-rich tracts occupy residues 1-19 (MKDE…EPES) and 29-45 (QQGE…GEIK). Positions 1-45 (MKDEHNQEHDHLSPKEPESYQKAYACKEQQGEEKQEASEKEGEIK) are disordered.

This sequence belongs to the GrpE family. Homodimer.

It is found in the cytoplasm. Participates actively in the response to hyperosmotic and heat shock by preventing the aggregation of stress-denatured proteins, in association with DnaK and GrpE. It is the nucleotide exchange factor for DnaK and may function as a thermosensor. Unfolded proteins bind initially to DnaJ; upon interaction with the DnaJ-bound protein, DnaK hydrolyzes its bound ATP, resulting in the formation of a stable complex. GrpE releases ADP from DnaK; ATP binding to DnaK triggers the release of the substrate protein, thus completing the reaction cycle. Several rounds of ATP-dependent interactions between DnaJ, DnaK and GrpE are required for fully efficient folding. The polypeptide is Protein GrpE (Helicobacter pylori (strain J99 / ATCC 700824) (Campylobacter pylori J99)).